Reading from the N-terminus, the 356-residue chain is Homoserine O-acetyltransferase (356 aa).

The region spanning 50-335 (NVILVCHALT…DEPYGHDAFL (286 aa)) is the AB hydrolase-1 domain. Serine 146 (nucleophile) is an active-site residue. Substrate is bound at residue arginine 215. Catalysis depends on residues aspartate 302 and histidine 331. A substrate-binding site is contributed by aspartate 332.

The protein belongs to the AB hydrolase superfamily. MetX family. As to quaternary structure, homodimer.

The protein localises to the cytoplasm. The catalysed reaction is L-homoserine + acetyl-CoA = O-acetyl-L-homoserine + CoA. It functions in the pathway amino-acid biosynthesis; L-methionine biosynthesis via de novo pathway; O-acetyl-L-homoserine from L-homoserine: step 1/1. Its function is as follows. Transfers an acetyl group from acetyl-CoA to L-homoserine, forming acetyl-L-homoserine. This chain is Homoserine O-acetyltransferase, found in Chlorobaculum parvum (strain DSM 263 / NCIMB 8327) (Chlorobium vibrioforme subsp. thiosulfatophilum).